A 303-amino-acid chain; its full sequence is Ribosomal RNA small subunit methyltransferase H (303 aa).

S-adenosyl-L-methionine is bound by residues 33 to 35 (GGH), aspartate 52, phenylalanine 78, aspartate 99, and glutamine 106.

Belongs to the methyltransferase superfamily. RsmH family.

The protein resides in the cytoplasm. It carries out the reaction cytidine(1402) in 16S rRNA + S-adenosyl-L-methionine = N(4)-methylcytidine(1402) in 16S rRNA + S-adenosyl-L-homocysteine + H(+). Functionally, specifically methylates the N4 position of cytidine in position 1402 (C1402) of 16S rRNA. This Phytoplasma australiense protein is Ribosomal RNA small subunit methyltransferase H.